Consider the following 1443-residue polypeptide: Lysophospholipase NTE1 (1443 aa).

Over 1 to 59 (MEEELAIEDLPRLTGTVSLNNGLLHSIYNETTVFKILRWSLVEIPKYILKLMSKNLEIN) the chain is Lumenal. The chain crosses the membrane as a helical span at residues 60–80 (LNVSSILIITLLIAAGILVIV). The Cytoplasmic segment spans residues 81 to 1443 (RYKFLTGYSE…RIKMYRRNTM (1363 aa)). The segment covering 103–118 (ALGQQSTNYPKSTSSG) has biased composition (polar residues). 2 disordered regions span residues 103–122 (ALGQQSTNYPKSTSSGLFVE) and 199–251 (KYDE…GKMH). Acidic residues predominate over residues 210-235 (EGEEADEDDEEEEKEVGDDGDDEMDV). Residues 619–750 (LYKR…LKSL) and 746–871 (KLKS…VASK) contribute to the a nucleoside 3',5'-cyclic phosphate site. The 165-residue stretch at 1136–1300 (LVLGGGGSRG…LDNLPVMEMK (165 aa)) folds into the PNPLA domain. The GXGXXG motif lies at 1140–1145 (GGGSRG). The GXSXG signature appears at 1167 to 1171 (GTSIG). The Nucleophile role is filled by S1169. Catalysis depends on D1287, which acts as the Proton acceptor. Residues 1287–1289 (DGG) carry the DGA/G motif.

It belongs to the NTE family.

It is found in the endoplasmic reticulum membrane. It catalyses the reaction a 1-acyl-sn-glycero-3-phosphocholine + H2O = sn-glycerol 3-phosphocholine + a fatty acid + H(+). With respect to regulation, inhibited by organophosphorus esters. Intracellular phospholipase B that catalyzes the double deacylation of phosphatidylcholine (PC) to glycerophosphocholine (GroPCho). Plays an important role in membrane lipid homeostasis. Responsible for the rapid PC turnover in response to inositol, elevated temperatures, or when choline is present in the growth medium. This Lodderomyces elongisporus (strain ATCC 11503 / CBS 2605 / JCM 1781 / NBRC 1676 / NRRL YB-4239) (Yeast) protein is Lysophospholipase NTE1 (NTE1).